Here is a 339-residue protein sequence, read N- to C-terminus: RNA polymerase principal sigma factor HrdC (339 aa).

Residues 1–10 show a composition bias toward low complexity; the sequence is MAPTARTPTA. Disordered stretches follow at residues 1–37 and 71–101; these read MAPTARTPTARTRDDRRATTRTARLRTRIPEPDEEPD and REELETADTGEPAPTPRRRRTLEETVHDGQE. The segment covering 91 to 101 has biased composition (basic and acidic residues); it reads TLEETVHDGQE. Residues 130–143 carry the Polymerase core binding motif; that stretch reads DVIQEGNLGLIRAV. Positions 300 to 319 form a DNA-binding region, H-T-H motif; that stretch reads LQQVAQHVGLTRERVRQLEK.

The protein belongs to the sigma-70 factor family. In terms of assembly, interacts transiently with the RNA polymerase catalytic core.

In terms of biological role, sigma factors are initiation factors that promote the attachment of RNA polymerase to specific initiation sites and are then released. The polypeptide is RNA polymerase principal sigma factor HrdC (hrdC) (Streptomyces coelicolor (strain ATCC BAA-471 / A3(2) / M145)).